A 428-amino-acid polypeptide reads, in one-letter code: Enolase (428 aa).

Glutamine 162 is a (2R)-2-phosphoglycerate binding site. Glutamate 204 serves as the catalytic Proton donor. Residues aspartate 241, glutamate 286, and aspartate 313 each coordinate Mg(2+). Residues lysine 338, arginine 367, serine 368, and lysine 389 each coordinate (2R)-2-phosphoglycerate. The active-site Proton acceptor is lysine 338.

The protein belongs to the enolase family. Component of the RNA degradosome, a multiprotein complex involved in RNA processing and mRNA degradation. Mg(2+) serves as cofactor.

It localises to the cytoplasm. It is found in the secreted. The protein localises to the cell surface. It catalyses the reaction (2R)-2-phosphoglycerate = phosphoenolpyruvate + H2O. Its pathway is carbohydrate degradation; glycolysis; pyruvate from D-glyceraldehyde 3-phosphate: step 4/5. Functionally, catalyzes the reversible conversion of 2-phosphoglycerate (2-PG) into phosphoenolpyruvate (PEP). It is essential for the degradation of carbohydrates via glycolysis. This chain is Enolase, found in Vesicomyosocius okutanii subsp. Calyptogena okutanii (strain HA).